The sequence spans 182 residues: NADH-quinone oxidoreductase subunit B (182 aa).

Positions 46, 47, 112, and 141 each coordinate [4Fe-4S] cluster.

This sequence belongs to the complex I 20 kDa subunit family. As to quaternary structure, NDH-1 is composed of 14 different subunits. Subunits NuoB, C, D, E, F, and G constitute the peripheral sector of the complex. It depends on [4Fe-4S] cluster as a cofactor.

The protein localises to the cell inner membrane. The enzyme catalyses a quinone + NADH + 5 H(+)(in) = a quinol + NAD(+) + 4 H(+)(out). In terms of biological role, NDH-1 shuttles electrons from NADH, via FMN and iron-sulfur (Fe-S) centers, to quinones in the respiratory chain. The immediate electron acceptor for the enzyme in this species is believed to be a menaquinone. Couples the redox reaction to proton translocation (for every two electrons transferred, four hydrogen ions are translocated across the cytoplasmic membrane), and thus conserves the redox energy in a proton gradient. In Flavobacterium johnsoniae (strain ATCC 17061 / DSM 2064 / JCM 8514 / BCRC 14874 / CCUG 350202 / NBRC 14942 / NCIMB 11054 / UW101) (Cytophaga johnsonae), this protein is NADH-quinone oxidoreductase subunit B.